The chain runs to 451 residues: Gamma-aminobutyric acid receptor subunit alpha-2 (451 aa).

An N-terminal signal peptide occupies residues 1–28; it reads MKTKLNIYNMQLLLFVFLVWDPARLVLA. The Extracellular segment spans residues 29–249; it reads NIQEDEAKNN…MTAHFHLKRK (221 aa). A glycan (N-linked (GlcNAc...) asparagine) is linked at N38. A 4-aminobutanoate-binding site is contributed by R94. A glycan (N-linked (GlcNAc...) asparagine) is linked at N138. T157 serves as a coordination point for 4-aminobutanoate. The cysteines at positions 166 and 180 are disulfide-linked. A helical membrane pass occupies residues 250–270; sequence IGYFVIQTYLPCIMTVILSQV. Residues 271-280 are Cytoplasmic-facing; the sequence is SFWLNRESVP. A helical membrane pass occupies residues 281 to 300; that stretch reads ARTVFGVTTVLTMTTLSISA. Residues 301–311 are Extracellular-facing; that stretch reads RNSLPKVAYAT. Residues 312–332 form a helical membrane-spanning segment; that stretch reads AMDWFIAVCYAFVFSALIEFA. Topologically, residues 333–420 are cytoplasmic; sequence TVNYFTKRGW…FNSVSKIDRM (88 aa). The chain crosses the membrane as a helical span at residues 421–441; the sequence is SRIVFPVLFGTFNLVYWATYL. Residues 442 to 451 lie on the Extracellular side of the membrane; that stretch reads NREPVLGVSP.

The protein belongs to the ligand-gated ion channel (TC 1.A.9) family. Gamma-aminobutyric acid receptor (TC 1.A.9.5) subfamily. GABRA2 sub-subfamily. Heteropentamer, formed by a combination of alpha (GABRA1-6), beta (GABRB1-3), gamma (GABRG1-3), delta (GABRD), epsilon (GABRE), rho (GABRR1-3), pi (GABRP) and theta (GABRQ) subunits, each subunit exhibiting distinct physiological and pharmacological properties. Interacts with UBQLN1. Interacts with KIF21B. Interacts with LHFPL4. Interacts with SHISA7; interaction leads to the regulation of GABA(A) receptor trafficking, channel deactivation kinetics and pharmacology. Glycosylated.

Its subcellular location is the postsynaptic cell membrane. It localises to the cell membrane. The protein resides in the cytoplasmic vesicle membrane. The protein localises to the cell projection. It is found in the dendrite. The enzyme catalyses chloride(in) = chloride(out). Activated by pentobarbital. Inhibited by the antagonist bicuculline. In terms of biological role, alpha subunit of the heteropentameric ligand-gated chloride channel gated by gamma-aminobutyric acid (GABA), a major inhibitory neurotransmitter in the brain. GABA-gated chloride channels, also named GABA(A) receptors (GABAAR), consist of five subunits arranged around a central pore and contain GABA active binding site(s) located at the alpha and beta subunit interface(s). When activated by GABA, GABAARs selectively allow the flow of chloride anions across the cell membrane down their electrochemical gradient. Chloride influx into the postsynaptic neuron following GABAAR opening decreases the neuron ability to generate a new action potential, thereby reducing nerve transmission. The alpha-2 subunit exhibits synaptogenic activity together with beta-2 and very little to no activity together with beta-3, the gamma-2 subunit being necessary but not sufficient to induce rapid synaptic contacts formation. In Pongo abelii (Sumatran orangutan), this protein is Gamma-aminobutyric acid receptor subunit alpha-2 (GABRA2).